The primary structure comprises 670 residues: Solute carrier organic anion transporter family member 1A6 (670 aa).

Over Met1 to Lys20 the chain is Cytoplasmic. A helical transmembrane segment spans residues Val21–Met40. Topologically, residues Asn41–Gly59 are extracellular. Asn52 is a glycosylation site (N-linked (GlcNAc...) asparagine). Residues Leu60–Gly80 form a helical membrane-spanning segment. The Cytoplasmic segment spans residues Arg81 to Pro86. A helical membrane pass occupies residues Ile87–Gly111. The Extracellular segment spans residues Arg112–Ser155. N-linked (GlcNAc...) asparagine glycosylation is found at Asn124 and Asn135. The chain crosses the membrane as a helical span at residues Leu156–Glu184. Residues Asp185–Lys203 lie on the Cytoplasmic side of the membrane. A helical transmembrane segment spans residues Ile204–Met224. Residues Gly225 to Val242 are Extracellular-facing. A helical transmembrane segment spans residues Gly243–Pro267. The Cytoplasmic portion of the chain corresponds to Lys268–Ser311. The tract at residues Glu276–Lys295 is disordered. Residues Leu312–Val333 form a helical membrane-spanning segment. Topologically, residues Ser334–Glu353 are extracellular. Residues Ala354–Met377 traverse the membrane as a helical segment. The Cytoplasmic segment spans residues Lys378–Lys381. The helical transmembrane segment at Ile382–Asn405 threads the bilayer. At Phe406–Phe513 the chain is on the extracellular side. The 56-residue stretch at Asn433 to Gln488 folds into the Kazal-like domain. Disulfide bonds link Cys439/Cys469, Cys445/Cys465, and Cys454/Cys486. N-linked (GlcNAc...) asparagine glycosylation occurs at Asn492. The helical transmembrane segment at Leu514–Leu536 threads the bilayer. Topologically, residues Arg537–Ser545 are cytoplasmic. Residues Leu546–Ile571 form a helical membrane-spanning segment. The Extracellular portion of the chain corresponds to Asp572–Pro605. Residues Ala606 to Met623 traverse the membrane as a helical segment. Residues Arg624–Leu670 are Cytoplasmic-facing. Ser634 bears the Phosphoserine mark. The disordered stretch occupies residues Lys647–Leu670.

Belongs to the organo anion transporter (TC 2.A.60) family.

Its subcellular location is the cell membrane. Functionally, may mediate the Na(+)-independent transport of organic anions. This Rattus norvegicus (Rat) protein is Solute carrier organic anion transporter family member 1A6 (Slco1a6).